We begin with the raw amino-acid sequence, 539 residues long: Membrane protein insertase YidC (539 aa).

Residues 7 to 27 form a helical membrane-spanning segment; the sequence is IIAIALSFVVLVGWSYLADHM. The tract at residues 32 to 64 is disordered; it reads QPAPQAQQEETAPSASQAAPQSASQAAAPAPRA. The next 3 helical transmembrane spans lie at 347 to 367, 418 to 438, and 498 to 518; these read YVGN…LVFW, GGCL…QALL, and IMMF…SGLV.

It belongs to the OXA1/ALB3/YidC family. Type 1 subfamily. Interacts with the Sec translocase complex via SecD. Specifically interacts with transmembrane segments of nascent integral membrane proteins during membrane integration.

The protein localises to the cell inner membrane. Functionally, required for the insertion and/or proper folding and/or complex formation of integral membrane proteins into the membrane. Involved in integration of membrane proteins that insert both dependently and independently of the Sec translocase complex, as well as at least some lipoproteins. Aids folding of multispanning membrane proteins. This Nitratidesulfovibrio vulgaris (strain DSM 19637 / Miyazaki F) (Desulfovibrio vulgaris) protein is Membrane protein insertase YidC.